The following is a 145-amino-acid chain: MLKEFKEFAIRGNVIDLAIGIIIGGAFGKIVDSLVKDVIMPPVGMIMGKMDFASLFLNLSGTEYATLAEAKKAGAATLNYGIFISTIVDFLIMAFVVFLMVKQINRMKKEAPAPVAASDSKDCPFCLSPIPLQATRCPHCTSNLK.

2 helical membrane-spanning segments follow: residues 14–34 (VIDLAIGIIIGGAFGKIVDSL) and 81–101 (GIFISTIVDFLIMAFVVFLMV).

The protein belongs to the MscL family. Homopentamer.

The protein localises to the cell inner membrane. Its function is as follows. Channel that opens in response to stretch forces in the membrane lipid bilayer. May participate in the regulation of osmotic pressure changes within the cell. The sequence is that of Large-conductance mechanosensitive channel from Pelobacter propionicus (strain DSM 2379 / NBRC 103807 / OttBd1).